A 463-amino-acid chain; its full sequence is Exodeoxyribonuclease 7 large subunit (463 aa).

Belongs to the XseA family. Heterooligomer composed of large and small subunits.

It is found in the cytoplasm. The enzyme catalyses Exonucleolytic cleavage in either 5'- to 3'- or 3'- to 5'-direction to yield nucleoside 5'-phosphates.. Functionally, bidirectionally degrades single-stranded DNA into large acid-insoluble oligonucleotides, which are then degraded further into small acid-soluble oligonucleotides. In Klebsiella pneumoniae subsp. pneumoniae (strain ATCC 700721 / MGH 78578), this protein is Exodeoxyribonuclease 7 large subunit.